Reading from the N-terminus, the 305-residue chain is Fructose-bisphosphate aldolase (305 aa).

D-glyceraldehyde 3-phosphate is bound at residue S49. D80 functions as the Proton donor in the catalytic mechanism. Residues H81, D102, E132, and H178 each coordinate Zn(2+). Residue G179 participates in dihydroxyacetone phosphate binding. H208 serves as a coordination point for Zn(2+). Dihydroxyacetone phosphate is bound by residues 209-211 (GAS) and 251-254 (NTDT).

It belongs to the class II fructose-bisphosphate aldolase family. As to quaternary structure, homotetramer. The cofactor is Zn(2+).

The catalysed reaction is beta-D-fructose 1,6-bisphosphate = D-glyceraldehyde 3-phosphate + dihydroxyacetone phosphate. The protein operates within carbohydrate degradation; glycolysis; D-glyceraldehyde 3-phosphate and glycerone phosphate from D-glucose: step 4/4. Catalyzes the aldol condensation of dihydroxyacetone phosphate (DHAP or glycerone-phosphate) with glyceraldehyde 3-phosphate (G3P) to form fructose 1,6-bisphosphate (FBP) in gluconeogenesis and the reverse reaction in glycolysis. This chain is Fructose-bisphosphate aldolase, found in Thermus caldophilus.